Reading from the N-terminus, the 66-residue chain is Stress-induced protein KIN2 (66 aa).

Polar residues predominate over residues 1–10 (MSETNKNAFQ). Positions 1-20 (MSETNKNAFQAGQAAGKAEE) are disordered. Repeats lie at residues 31 to 35 (DAAAA) and 49 to 53 (DAAVG).

In terms of assembly, interacts with DEK3. In terms of tissue distribution, expressed at high levels in embryos and mature seeds.

The sequence is that of Stress-induced protein KIN2 from Arabidopsis thaliana (Mouse-ear cress).